Reading from the N-terminus, the 143-residue chain is AP-4 complex subunit sigma (143 aa).

The protein belongs to the adaptor complexes small subunit family. In terms of assembly, adaptor protein complex 4 (AP-4) is a heterotetramer composed of two large adaptins (epsilon-type subunit and beta-type subunit), a medium adaptin (mu-type subunit) and a small adaptin (sigma-type subunit). Interacts with EHD2.

It localises to the golgi apparatus. Its subcellular location is the trans-Golgi network. The protein localises to the membrane. It is found in the coated pit. Subunit of novel type of clathrin- or non-clathrin-associated protein coat involved in targeting proteins from the trans-Golgi network (TGN) to the endosomal-lysosomal system. The sequence is that of AP-4 complex subunit sigma from Arabidopsis thaliana (Mouse-ear cress).